The primary structure comprises 381 residues: GDP-mannose transporter (381 aa).

A compositionally biased stretch (basic and acidic residues) spans 1–12; sequence MSDDKKSDDYRV. Residues 1-28 are disordered; that stretch reads MSDDKKSDDYRVDMPSSRTSRAPSPIMR. At 1–36 the chain is on the cytoplasmic side; the sequence is MSDDKKSDDYRVDMPSSRTSRAPSPIMRPALKSAPS. The helical transmembrane segment at 37–57 threads the bilayer; the sequence is LTENPMAAVLAYCASSILMTV. The Lumenal portion of the chain corresponds to 58 to 67; sequence TNKYVLSGVD. Residues 68-88 form a helical membrane-spanning segment; the sequence is FNLNFFLLCVQSVVCVTAISI. The Cytoplasmic portion of the chain corresponds to 89-107; it reads CKAAGLITYRDFNTDEAKK. The helical transmembrane segment at 108 to 126 threads the bilayer; it reads WFPISLLLIGMIYTGTWAL. At 127-130 the chain is on the lumenal side; sequence KYLS. Residues 131 to 153 traverse the membrane as a helical segment; that stretch reads IPVYTIFKNLTIILIAYGEVLWF. The Cytoplasmic portion of the chain corresponds to 154–161; that stretch reads GGSVTPMT. The helical transmembrane segment at 162–184 threads the bilayer; that stretch reads LFSFGLMVLSSIIAAWADIQHAL. At 185–199 the chain is on the lumenal side; the sequence is NSFGQQSEAANEALS. Residues 200–220 traverse the membrane as a helical segment; it reads TMHAGYLWMAFNCVCSATYLL. Topologically, residues 221-242 are cytoplasmic; that stretch reads SMRKRIKLTNFKDYDTMYYNNL. A helical transmembrane segment spans residues 243–263; the sequence is LTIPILLVASILVEDWSSANI. The Lumenal portion of the chain corresponds to 264–274; that stretch reads QKNFPPEQRNT. Residues 275–295 form a helical membrane-spanning segment; that stretch reads VIMVMVISGMSTVFISYTSAW. Residues 296–303 lie on the Cytoplasmic side of the membrane; the sequence is AVRVTSST. The chain crosses the membrane as a helical span at residues 304–324; sequence TYSMVGALNKLPIAISGLVFF. Over 325–327 the chain is Lumenal; the sequence is DAP. The helical transmembrane segment at 328–348 threads the bilayer; the sequence is VTFGSVSAIFVGFVSGIVYAV. Over 349–381 the chain is Cytoplasmic; it reads AKVRQNSKPKTVLPTTNIPLSASSRSMQDSLKA.

The protein belongs to the TPT transporter family. SLC35D subfamily. In terms of assembly, homooligomer.

It is found in the golgi apparatus membrane. The protein resides in the cytoplasmic vesicle membrane. Its subcellular location is the endoplasmic reticulum membrane. Functionally, involved in the import of GDP-mannose from the cytoplasm into the Golgi lumen. In Phaeosphaeria nodorum (strain SN15 / ATCC MYA-4574 / FGSC 10173) (Glume blotch fungus), this protein is GDP-mannose transporter (VRG4).